Consider the following 689-residue polypeptide: Methionine--tRNA ligase (689 aa).

The short motif at 15 to 25 (PYANGPIHLGH) is the 'HIGH' region element. The Zn(2+) site is built by Cys-146, Cys-149, Cys-159, and Cys-162. Positions 332 to 336 (KMSKS) match the 'KMSKS' region motif. Lys-335 contributes to the ATP binding site. The 102-residue stretch at 588–689 (DFAKIDLRIA…EGAQPGMRVK (102 aa)) folds into the tRNA-binding domain.

Belongs to the class-I aminoacyl-tRNA synthetase family. MetG type 1 subfamily. Homodimer. Zn(2+) serves as cofactor.

The protein resides in the cytoplasm. It carries out the reaction tRNA(Met) + L-methionine + ATP = L-methionyl-tRNA(Met) + AMP + diphosphate. In terms of biological role, is required not only for elongation of protein synthesis but also for the initiation of all mRNA translation through initiator tRNA(fMet) aminoacylation. In Shewanella baltica (strain OS223), this protein is Methionine--tRNA ligase.